We begin with the raw amino-acid sequence, 335 residues long: Acetyl-coenzyme A carboxylase carboxyl transferase subunit alpha (335 aa).

The 261-residue stretch at 48–308 (TLELKVDALR…KEILIEELKA (261 aa)) folds into the CoA carboxyltransferase C-terminal domain.

Belongs to the AccA family. In terms of assembly, acetyl-CoA carboxylase is a heterohexamer composed of biotin carboxyl carrier protein (AccB), biotin carboxylase (AccC) and two subunits each of ACCase subunit alpha (AccA) and ACCase subunit beta (AccD).

Its subcellular location is the cytoplasm. It carries out the reaction N(6)-carboxybiotinyl-L-lysyl-[protein] + acetyl-CoA = N(6)-biotinyl-L-lysyl-[protein] + malonyl-CoA. The protein operates within lipid metabolism; malonyl-CoA biosynthesis; malonyl-CoA from acetyl-CoA: step 1/1. Functionally, component of the acetyl coenzyme A carboxylase (ACC) complex. First, biotin carboxylase catalyzes the carboxylation of biotin on its carrier protein (BCCP) and then the CO(2) group is transferred by the carboxyltransferase to acetyl-CoA to form malonyl-CoA. The protein is Acetyl-coenzyme A carboxylase carboxyl transferase subunit alpha of Pelodictyon phaeoclathratiforme (strain DSM 5477 / BU-1).